We begin with the raw amino-acid sequence, 109 residues long: Tyrosine-protein phosphatase 4 (109 aa).

In terms of domain architecture, Tyrosine-protein phosphatase spans 1-109 (SKSASIVMLT…QNSGNHPIVI (109 aa)). Glu78 is a substrate binding site.

The protein belongs to the protein-tyrosine phosphatase family.

It catalyses the reaction O-phospho-L-tyrosyl-[protein] + H2O = L-tyrosyl-[protein] + phosphate. The sequence is that of Tyrosine-protein phosphatase 4 (STY-4) from Styela plicata (Wrinkled sea squirt).